The sequence spans 1186 residues: MDCNLQSQQNIPYNVLAIPVSNVNALVDTAGDLKKAWEEFQKTGSFSLTALQQGFSASQGGAFNYLTLLQSGISLAGSFVPGGTFVAPIVNMVIGWLWPHKNKTADTENLIKLIDEEIQKQLNKALLDQDRNNWTSFLESIFDTSATVSNAIIDAQWSGTVDTTNRQQKTPTTSDYLNVVGKFDSADSSIITNENQIMNGNFDVAAAPYFVIGATLRLSLYQSYIKFCNSWIDAVGFSTNDANTQKANLARTKLTMRTTINEYTQRVMKVFKDSKNMPTIGTNKFSVDAYNVYVKGMTLNVLDMVAIWSSLYPNDYTSQTAIEQTRVTFSNMVGQEEGTDGTLKIYNTFDSLSYQHSLIPNNNVNLISYYTDELQNLELAVYTPKGGSGYAYPYGFILNYANSNYKYGDNDPTGKPLNKQDGPIQQINAATQNSKYLDGETINGIGASLPGYCTTGCSATEQPFSCTSTANSYKASCNPSDTNQKINALYAFTQTNVKGSTGKLGVLASLVPYDLNPKNVFGELDSDTNNVILKGIPAEKGYFPNNARPTVVKEWINGASAVPFYSGNTLFMTATNLTATQYKIRIRYANPNSDTQIGVLITQNGSQISNSNLTLYSTTDSSMSSNLPQNVYVTGENGNYTLLDLYSTTNVLSTGDITLKLTGGNQKIFIDRIEFIPTMPVPAPTNNTNNNNGDNGNNNPPHHGCAIAGTQQLCSGPPKFEQVSDLEKITTQVYMLFKSSSYEELALKVSSYQINQVALKVMALSDEKFCEEKRLLRKLVNKANQLLEARNLLVGGNFETTQNWVLGTNAYINYDSFLFNGNYLSLQPASGFFTSYAYQKIDESTLKPYTRYKVSGFIGQSNQVELIISRYGKEIDKILNVPYAGPLPITADASITCCAPEIDQCDGGQSDSHFFNYSIDVGALHPELNPGIEIGLKIVQSNGYITISNLEIIEERPLTEMEIQAVNRKDQKWKREKLLECASVSELLQPIINQIDSLFKDANWYNDILPHVTYQTLKNIIVPDLPKLKHWFIDHLPGEYHEIEQKMKEALKHAFTQLDEKNLIHNGHFATNLIDWQVEGDARMKVLENNALALQLSNWDSSVSQSIDILEFDEDKAYKLRVYAQGSGTIQFGNCEDEAIQFNTNSFVYKEKIIYFDTPSINLHIQSEGSEFVVSSIDLVELSDDE.

It belongs to the delta endotoxin family.

In terms of biological role, promotes colloidosmotic lysis by binding to the midgut epithelial cells of insects. The sequence is that of Pesticidal crystal protein Cry14Aa (cry14Aa) from Bacillus thuringiensis subsp. sotto.